Here is a 356-residue protein sequence, read N- to C-terminus: Carbohydrate sulfotransferase 10 (356 aa).

Over 1-6 (MHHQWL) the chain is Cytoplasmic. Residues 7 to 27 (LLAACFWVIFMFMVASKFITL) form a helical; Signal-anchor for type II membrane protein membrane-spanning segment. At 28–356 (TFKDPDVYSA…GYQKPDFLLN (329 aa)) the chain is on the lumenal side. Asparagine 99 carries an N-linked (GlcNAc...) asparagine glycan. 3'-phosphoadenylyl sulfate contacts are provided by residues 127 to 133 (PKVGNTQ) and 189 to 197 (RDPFERLIS). N-linked (GlcNAc...) asparagine glycans are attached at residues asparagine 228 and asparagine 316.

This sequence belongs to the sulfotransferase 2 family. In terms of tissue distribution, in fetal tissues, it is predominantly expressed in brain, and weakly expressed in lung, kidney and liver. In adult, it is highly expressed in brain, testis, ovary, expressed at intermediate level in heart, pancreas, skeletal muscle, spleen and thymus, and weakly expressed in other tissues. In brain, it is expressed at higher level in the frontal lobe.

It is found in the golgi apparatus membrane. The enzyme catalyses 3-O-{beta-D-GlcA-(1-&gt;[3)-alpha-D-Xyl-(1-&gt;3)-beta-D-GlcA-(1-&gt;](n)-4)-beta-D-Xyl-(1-&gt;4)-Rib-ol-P-Rib-ol-P-3-beta-D-GalNAc-(1-&gt;3)-beta-D-GlcNAc-(1-&gt;4)-O-6-P-alpha-D-Man}-L-Thr-[protein] + 3'-phosphoadenylyl sulfate = 3-O-{O-3-S-beta-D-GlcA-(1-&gt;[3)-alpha-D-Xyl-(1-&gt;3)-beta-D-GlcA-(1-&gt;](n)-4)-beta-D-Xyl-(1-&gt;4)-Rib-ol-P-Rib-ol-P-3-beta-D-GalNAc-(1-&gt;3)-beta-D-GlcNAc-(1-&gt;4)-O-6-P-alpha-D-Man}-L-Thr-[protein] + adenosine 3',5'-bisphosphate + H(+). The catalysed reaction is 17beta-estradiol 3-O-(beta-D-glucuronate) + 3'-phosphoadenylyl sulfate = 17beta-estradiol 3-O-(3-sulfo-beta-D-glucuronate) + adenosine 3',5'-bisphosphate + H(+). It carries out the reaction 17beta-estradiol 3-O-(beta-D-glucuronate) 17-sulfate + 3'-phosphoadenylyl sulfate = 17beta-estradiol 3-O-(3-sulfo-beta-D-glucuronate) 17-sulfate + adenosine 3',5'-bisphosphate + H(+). It catalyses the reaction 17beta-estradiol 17-O-(beta-D-glucuronate) + 3'-phosphoadenylyl sulfate = 17beta-estradiol 17-O-(3-sulfo-beta-D-glucuronate) + adenosine 3',5'-bisphosphate + H(+). The enzyme catalyses 16alpha,17beta-estriol 3-O-(beta-D-glucuronate) + 3'-phosphoadenylyl sulfate = 16alpha,17beta-estriol 3-O-(3-sulfo-beta-D-glucuronate) + adenosine 3',5'-bisphosphate + H(+). The catalysed reaction is 16alpha,17beta-estriol 16-O-(beta-D-glucuronate) + 3'-phosphoadenylyl sulfate = 16alpha,17beta-estriol 16-O-(3-sulfo-beta-D-glucuronate) + adenosine 3',5'-bisphosphate + H(+). It carries out the reaction 16alpha,17beta-estriol 17-O-(beta-D-glucuronate) + 3'-phosphoadenylyl sulfate = 16alpha,17beta-estriol 17-O-(3-sulfo-beta-D-glucuronate) + adenosine 3',5'-bisphosphate + H(+). It catalyses the reaction estrone 3-O-(beta-D-glucuronate) + 3'-phosphoadenylyl sulfate = estrone 3-O-(3-sulfo-beta-D-glucuronate) + adenosine 3',5'-bisphosphate + H(+). The enzyme catalyses 3alpha,20alpha-dihydroxy-5beta-pregnane 3-O-(beta-D-glucuronate) + 3'-phosphoadenylyl sulfate = 3alpha,20alpha-dihydroxy-5beta-pregnane 3-O-(3-sulfo-beta-D-glucuronate) + adenosine 3',5'-bisphosphate + H(+). The catalysed reaction is testosterone 17-O-(beta-D-glucuronate) + 3'-phosphoadenylyl sulfate = testosterone 17-O-(3-sulfo-beta-D-glucuronate) + adenosine 3',5'-bisphosphate + H(+). It carries out the reaction 3beta-androst-5-en-17-one 3-O-(beta-D-glucuronate) + 3'-phosphoadenylyl sulfate = 3beta-androst-5-en-17-one 3-O-(3-sulfo-beta-D-glucuronate) + adenosine 3',5'-bisphosphate + H(+). It catalyses the reaction 3alpha,17alpha-dihydroxy-5beta-androstane-11-one-17beta-carboxylate 3-O-(beta-D-glucuronate) + 3'-phosphoadenylyl sulfate = 3alpha,17alpha-dihydroxy-5beta-androstane-11-one-17beta-carboxylate 3-O-(3-sulfo-beta-D-glucuronate) + adenosine 3',5'-bisphosphate + H(+). The enzyme catalyses 3alpha-hydroxyetiocholan-17-one 3-O-(beta-D-glucuronate) + 3'-phosphoadenylyl sulfate = 3alpha-hydroxyetiocholan-17-one 3-O-(3-sulfo-beta-D-glucuronate) + adenosine 3',5'-bisphosphate + H(+). It functions in the pathway steroid metabolism. Its pathway is protein modification; carbohydrate sulfation. Catalyzes the transfer of sulfate from 3'-phosphoadenylyl sulfate (PAPS) to position 3 of terminal glucuronic acid of both protein- and lipid-linked oligosaccharides. Participates in biosynthesis of HNK-1 carbohydrate structure 3-O-sulfo-beta-D-GlcA-(1-&gt;3)-beta-D-Gal-(1-&gt;4)-D-GlcNAc-R, a sulfated glucuronyl-lactosaminyl residue carried by many neural recognition molecules, which is involved in cell interactions during ontogenetic development and in synaptic plasticity in the adult. May be indirectly involved in synapse plasticity of the hippocampus, via its role in HNK-1 biosynthesis. Sulfates terminal glucuronyl residue of the laminin globular (LG)-domain binding epitope on DAG1/alpha-dystroglycan and prevents further polymerization by LARGE1 glycosyltransferase. Likely defines the chain length of LG epitope, conferring binding specificity to extracellular matrix components. Plays a role in down-regulating the steroid hormones. Sulfates glucuronidated estrogens and androgens with an impact in hormone cycle and fertility. Has a preference for glucuronyl moiety at the 3-hydroxyl group of a sterol ring rather than the 17-hydroxyl group, showing high catalytic efficiency for 17beta-estradiol 3-O-(beta-D-glucuronate) and dehydroepiandrosterone 3-O-(beta-D-glucuronate) hormones. The polypeptide is Carbohydrate sulfotransferase 10 (Homo sapiens (Human)).